A 222-amino-acid chain; its full sequence is Uracil-DNA glycosylase (222 aa).

The Proton acceptor role is filled by Asp61.

This sequence belongs to the uracil-DNA glycosylase (UDG) superfamily. UNG family.

It localises to the cytoplasm. The enzyme catalyses Hydrolyzes single-stranded DNA or mismatched double-stranded DNA and polynucleotides, releasing free uracil.. Functionally, excises uracil residues from the DNA which can arise as a result of misincorporation of dUMP residues by DNA polymerase or due to deamination of cytosine. This Aeromonas salmonicida (strain A449) protein is Uracil-DNA glycosylase.